Reading from the N-terminus, the 354-residue chain is UDP-3-O-acylglucosamine N-acyltransferase (354 aa).

Catalysis depends on His-258, which acts as the Proton acceptor.

Belongs to the transferase hexapeptide repeat family. LpxD subfamily. In terms of assembly, homotrimer.

The enzyme catalyses a UDP-3-O-[(3R)-3-hydroxyacyl]-alpha-D-glucosamine + a (3R)-hydroxyacyl-[ACP] = a UDP-2-N,3-O-bis[(3R)-3-hydroxyacyl]-alpha-D-glucosamine + holo-[ACP] + H(+). Its pathway is bacterial outer membrane biogenesis; LPS lipid A biosynthesis. Catalyzes the N-acylation of UDP-3-O-acylglucosamine using 3-hydroxyacyl-ACP as the acyl donor. Is involved in the biosynthesis of lipid A, a phosphorylated glycolipid that anchors the lipopolysaccharide to the outer membrane of the cell. In Rhizobium meliloti (strain 1021) (Ensifer meliloti), this protein is UDP-3-O-acylglucosamine N-acyltransferase.